A 542-amino-acid polypeptide reads, in one-letter code: uncharacterized protein (542 aa).

Residues 125–138 (ANSNSSSTGRDSTP) show a composition bias toward low complexity. Disordered stretches follow at residues 125-182 (ANSN…NHHN), 194-333 (LPPT…CSSS), 390-428 (SSSTLSSSSSTKTNNNSTTTTTTTTAKTSSTSTNDYSSI), and 459-487 (SSSSSSHVMKRSNGSSNGGNSTIQSPSCN). Positions 202–213 (QKPSFLSNSNQI) are enriched in polar residues. Low complexity-rich tracts occupy residues 228 to 306 (SYTS…NSNN), 314 to 333 (NKLSNSNHSTNSNFSQCSSS), 390 to 423 (SSSTLSSSSSTKTNNNSTTTTTTTTAKTSSTSTN), and 459 to 479 (SSSSSSHVMKRSNGSSNGGNS).

This is an uncharacterized protein from Dictyostelium discoideum (Social amoeba).